Reading from the N-terminus, the 336-residue chain is Peroxidase 72 (336 aa).

An N-terminal signal peptide occupies residues 1–23; that stretch reads MAKSLNILIAALSLIAFSPFCLC. 4 disulfides stabilise this stretch: Cys-42/Cys-122, Cys-75/Cys-80, Cys-128/Cys-329, and Cys-207/Cys-239. Residue His-73 is the Proton acceptor of the active site. 5 residues coordinate Ca(2+): Asp-74, Val-77, Gly-79, Asp-81, and Ser-83. Pro-170 lines the substrate pocket. Asn-173 carries N-linked (GlcNAc...) asparagine glycosylation. His-200 contacts heme b. Thr-201 contributes to the Ca(2+) binding site. An N-linked (GlcNAc...) asparagine glycan is attached at Asn-216. Ca(2+) is bound by residues Asp-252, Thr-255, and Asp-260.

Belongs to the peroxidase family. Classical plant (class III) peroxidase subfamily. Heme b is required as a cofactor. Ca(2+) serves as cofactor. Slightly expressed in roots.

It is found in the secreted. It catalyses the reaction 2 a phenolic donor + H2O2 = 2 a phenolic radical donor + 2 H2O. Its function is as follows. Removal of H(2)O(2), oxidation of toxic reductants, biosynthesis and degradation of lignin, suberization, auxin catabolism, response to environmental stresses such as wounding, pathogen attack and oxidative stress. These functions might be dependent on each isozyme/isoform in each plant tissue. The chain is Peroxidase 72 (PER72) from Arabidopsis thaliana (Mouse-ear cress).